Consider the following 216-residue polypeptide: Protein Nef (216 aa).

The interval 1–32 is disordered; the sequence is MGGKWSKHSVPGWSTVRERMRRAEPATDRVRQ. Gly2 carries N-myristoyl glycine; by host lipidation. Position 6 is a phosphoserine; by host (Ser6). Residues 16-32 are compositionally biased toward basic and acidic residues; that stretch reads VRERMRRAEPATDRVRQ. Residues 72 to 75 form an acidic; interacts with host PACS1 and PACS2; stabilizes the interaction of NEF/MHC-I with host AP1M1; necessary for MHC-I internalization region; that stretch reads EDEE. Residues 79-88 are SH3-binding; interaction with Src family tyrosine kinases; it reads PVRPQVPLRP. Positions 82–85 match the PxxP; stabilizes the interaction of NEF/MHC-I with host AP1M1; necessary for MHC-I internalization motif; that stretch reads PQVP. Residues 118–134 form a mediates dimerization, Nef-PTE1 interaction region; the sequence is DILDLWIYHTQGYFPDW. A binding to ATP6V1H region spans residues 158–190; that stretch reads VDPEKVEEANEGENNCLLHPMSQHGMDDPEKEV. A Dileucine internalization motif; necessary for CD4 internalization motif is present at residues 174–175; the sequence is LL. The Diacidic; necessary for CD4 internalization motif lies at 184–185; sequence DD.

The protein belongs to the lentivirus primate group Nef protein family. In terms of assembly, monomer; cytosolic form. Homodimer; membrane bound form. Interacts with Nef associated p21-activated kinase (PAK2); this interaction activates PAK2. Associates with the Nef-MHC-I-AP1 complex; this complex is required for MHC-I internalization. Interacts (via C-terminus) with host PI3-kinase. Interacts with host PACS1; this interaction seems to be weak. Interacts with host PACS2. Interacts with host LCK and MAPK3; these interactions inhibit the kinase activity of the latter. Interacts with host ATP6V1H; this interaction may play a role in CD4 endocytosis. Associates with the CD4-Nef-AP2 complex; this complex is required for CD4 internalization. Interacts with host AP2 subunit alpha and AP2 subunit sigma2. Interacts with TCR-zeta chain; this interaction up-regulates the Fas ligand (FasL) surface expression. Interacts with host HCK, LYN, and SRC; these interactions activate the Src family kinases. Interacts with MAP3K5; this interaction inhibits the Fas and TNFR-mediated death signals. Interacts with beta-COP and PTE1. Interacts with human RACK1; this increases Nef phosphorylation by PKC. Interacts with TP53; this interaction decreases the half-life of TP53, protecting the infected cell against p53-mediated apoptosis. The virion-associated Nef proteins are cleaved by the viral protease to release the soluble C-terminal core protein. Nef is probably cleaved concomitantly with viral structural proteins on maturation of virus particles. Post-translationally, myristoylated. In terms of processing, phosphorylated on serine residues, probably by host PKCdelta and theta.

The protein localises to the host cell membrane. It localises to the virion. Its subcellular location is the secreted. It is found in the host Golgi apparatus membrane. Its function is as follows. Factor of infectivity and pathogenicity, required for optimal virus replication. Alters numerous pathways of T-lymphocyte function and down-regulates immunity surface molecules in order to evade host defense and increase viral infectivity. Alters the functionality of other immunity cells, like dendritic cells, monocytes/macrophages and NK cells. In terms of biological role, in infected CD4(+) T-lymphocytes, down-regulates the surface MHC-I, mature MHC-II, CD4, CD28, CCR5 and CXCR4 molecules. Mediates internalization and degradation of host CD4 through the interaction of with the cytoplasmic tail of CD4, the recruitment of AP-2 (clathrin adapter protein complex 2), internalization through clathrin coated pits, and subsequent transport to endosomes and lysosomes for degradation. Diverts host MHC-I molecules to the trans-Golgi network-associated endosomal compartments by an endocytic pathway to finally target them for degradation. MHC-I down-regulation may involve AP-1 (clathrin adapter protein complex 1) or possibly Src family kinase-ZAP70/Syk-PI3K cascade recruited by PACS2. In consequence infected cells are masked for immune recognition by cytotoxic T-lymphocytes. Decreasing the number of immune receptors also prevents reinfection by more HIV particles (superinfection). Down-regulates host SERINC3 and SERINC5 thereby excluding these proteins from the viral particles. Virion infectivity is drastically higher when SERINC3 or SERINC5 are excluded from the viral envelope, because these host antiviral proteins impair the membrane fusion event necessary for subsequent virion penetration. Functionally, bypasses host T-cell signaling by inducing a transcriptional program nearly identical to that of anti-CD3 cell activation. Interaction with TCR-zeta chain up-regulates the Fas ligand (FasL). Increasing surface FasL molecules and decreasing surface MHC-I molecules on infected CD4(+) cells send attacking cytotoxic CD8+ T-lymphocytes into apoptosis. Plays a role in optimizing the host cell environment for viral replication without causing cell death by apoptosis. Protects the infected cells from apoptosis in order to keep them alive until the next virus generation is ready to strike. Inhibits the Fas and TNFR-mediated death signals by blocking MAP3K5/ASK1. Decreases the half-life of TP53, protecting the infected cell against p53-mediated apoptosis. Inhibits the apoptotic signals regulated by the Bcl-2 family proteins through the formation of a Nef/PI3-kinase/PAK2 complex that leads to activation of PAK2 and induces phosphorylation of host BAD. Its function is as follows. Extracellular Nef protein targets CD4(+) T-lymphocytes for apoptosis by interacting with CXCR4 surface receptors. This chain is Protein Nef, found in Homo sapiens (Human).